A 309-amino-acid polypeptide reads, in one-letter code: Homoserine O-succinyltransferase (309 aa).

Cys142 functions as the Acyl-thioester intermediate in the catalytic mechanism. Positions 163 and 192 each coordinate substrate. His235 acts as the Proton acceptor in catalysis. The active site involves Glu237. Residue Arg249 coordinates substrate.

This sequence belongs to the MetA family.

The protein localises to the cytoplasm. The catalysed reaction is L-homoserine + succinyl-CoA = O-succinyl-L-homoserine + CoA. The protein operates within amino-acid biosynthesis; L-methionine biosynthesis via de novo pathway; O-succinyl-L-homoserine from L-homoserine: step 1/1. In terms of biological role, transfers a succinyl group from succinyl-CoA to L-homoserine, forming succinyl-L-homoserine. The polypeptide is Homoserine O-succinyltransferase (Cronobacter sakazakii (strain ATCC BAA-894) (Enterobacter sakazakii)).